The chain runs to 66 residues: MKARDLHQLSIQELEAKLKELKTELFKLRITKKIEGLKEPSKIRDTKRDIARILTVINEKRRGQAV.

This sequence belongs to the universal ribosomal protein uL29 family.

In Hydrogenobaculum sp. (strain Y04AAS1), this protein is Large ribosomal subunit protein uL29.